The primary structure comprises 253 residues: FGFR1 oncogene partner 2 (253 aa).

A coiled-coil region spans residues 5-104; sequence IEKALADAKA…SALELIMSKY (100 aa). At Ser141 the chain carries Phosphoserine. A coiled-coil region spans residues 160 to 223; sequence LERRHLEANQ…LREILQITRE (64 aa). A disordered region spans residues 231-253; it reads DDASESTSLSALVTNSDLSLRKS. A compositionally biased stretch (polar residues) spans 235 to 253; sequence ESTSLSALVTNSDLSLRKS.

It belongs to the SIKE family. Expressed in bone marrow, spleen and thymus.

The protein resides in the cytoplasm. In terms of biological role, may be involved in wound healing pathway. The sequence is that of FGFR1 oncogene partner 2 (FGFR1OP2) from Homo sapiens (Human).